A 447-amino-acid polypeptide reads, in one-letter code: N-succinylarginine dihydrolase (447 aa).

Residues 19–28 (AGLSFGNEAS), Asn-110, and 137–138 (HR) contribute to the substrate site. Residue Glu-174 is part of the active site. Arg-212 provides a ligand contact to substrate. Residue His-248 is part of the active site. Substrate contacts are provided by Asp-250 and Asn-359. The active-site Nucleophile is the Cys-365.

The protein belongs to the succinylarginine dihydrolase family. As to quaternary structure, homodimer.

The catalysed reaction is N(2)-succinyl-L-arginine + 2 H2O + 2 H(+) = N(2)-succinyl-L-ornithine + 2 NH4(+) + CO2. Its pathway is amino-acid degradation; L-arginine degradation via AST pathway; L-glutamate and succinate from L-arginine: step 2/5. Functionally, catalyzes the hydrolysis of N(2)-succinylarginine into N(2)-succinylornithine, ammonia and CO(2). The protein is N-succinylarginine dihydrolase of Salmonella dublin (strain CT_02021853).